The sequence spans 712 residues: Polyribonucleotide nucleotidyltransferase (712 aa).

Mg(2+) is bound by residues aspartate 487 and aspartate 493. Positions 554–613 constitute a KH domain; sequence PKIITMTINPDKIRDVIGPSGKQINKIIEETGVKIDIEQDGTVFISSINQEMNDKAKKII. In terms of domain architecture, S1 motif spans 623 to 691; it reads GEIYEGKVKR…KQGRVNLSRK (69 aa).

The protein belongs to the polyribonucleotide nucleotidyltransferase family. Mg(2+) serves as cofactor.

It localises to the cytoplasm. The enzyme catalyses RNA(n+1) + phosphate = RNA(n) + a ribonucleoside 5'-diphosphate. In terms of biological role, involved in mRNA degradation. Catalyzes the phosphorolysis of single-stranded polyribonucleotides processively in the 3'- to 5'-direction. This chain is Polyribonucleotide nucleotidyltransferase, found in Bacillus cereus (strain G9842).